The sequence spans 483 residues: UDP-N-acetylmuramate--L-alanine ligase (483 aa).

An ATP-binding site is contributed by 125–131 (GTHGKTT).

The protein belongs to the MurCDEF family.

The protein resides in the cytoplasm. It carries out the reaction UDP-N-acetyl-alpha-D-muramate + L-alanine + ATP = UDP-N-acetyl-alpha-D-muramoyl-L-alanine + ADP + phosphate + H(+). The protein operates within cell wall biogenesis; peptidoglycan biosynthesis. Its function is as follows. Cell wall formation. This chain is UDP-N-acetylmuramate--L-alanine ligase, found in Pseudoalteromonas translucida (strain TAC 125).